A 372-amino-acid chain; its full sequence is Serine protease inhibitor 42Dd (372 aa).

Residues 1 to 15 form the signal peptide; it reads MYYLCIFLWVTSVAC. Residues Asn197 and Asn232 are each glycosylated (N-linked (GlcNAc...) asparagine).

It belongs to the serpin family. As to expression, expressed in the ovary.

It localises to the secreted. Its function is as follows. Serine protease inhibitor with activity toward trypsin. Involved in innate immunity to fungal infection by negatively regulating the Toll signaling pathway and suppressing the expression of the antifungal peptide drosomycin. Acts upstream of SPE and grass, and downstream of the fungal cell wall pattern recognition receptor GNBP3. May function specifically in the GNBP3-dependent beta-1,3-glucan branch of the Toll pathway. This chain is Serine protease inhibitor 42Dd, found in Drosophila melanogaster (Fruit fly).